The chain runs to 498 residues: NADP-dependent glyceraldehyde-3-phosphate dehydrogenase (498 aa).

Substrate-binding positions include arginine 118 and 171-172; that span reads NY. Residues lysine 194, threonine 197, and aspartate 232 each coordinate NADP(+). 247–251 is a binding site for NAD(+); the sequence is GGDTG. The Proton acceptor role is filled by glutamate 266. 299–301 provides a ligand contact to substrate; that stretch reads RCT. Cysteine 300 acts as the Nucleophile in catalysis. Glutamate 393 lines the NADP(+) pocket. Position 453 (arginine 453) interacts with substrate.

The protein belongs to the aldehyde dehydrogenase family.

It localises to the cytoplasm. The enzyme catalyses D-glyceraldehyde 3-phosphate + NADP(+) + H2O = (2R)-3-phosphoglycerate + NADPH + 2 H(+). Important as a means of generating NADPH for biosynthetic reactions. The chain is NADP-dependent glyceraldehyde-3-phosphate dehydrogenase (GPN1) from Zea mays (Maize).